The following is a 112-amino-acid chain: Class I hydrophobin 17 (112 aa).

Positions 1-19 (MYSQSMVLLAAAFASFVAA) are cleaved as a signal peptide. Intrachain disulfides connect cysteine 30-cysteine 90, cysteine 37-cysteine 84, cysteine 38-cysteine 74, and cysteine 91-cysteine 104. An N-linked (GlcNAc...) asparagine glycan is attached at asparagine 108.

Belongs to the fungal hydrophobin family. In terms of assembly, self-assembles to form functional amyloid fibrils called rodlets. Self-assembly into fibrillar rodlets occurs spontaneously at hydrophobic:hydrophilic interfaces and the rodlets further associate laterally to form amphipathic monolayers.

It localises to the secreted. The protein resides in the cell wall. Its function is as follows. Aerial growth, conidiation, and dispersal of filamentous fungi in the environment rely upon a capability of their secreting small amphipathic proteins called hydrophobins (HPBs) with low sequence identity. Class I can self-assemble into an outermost layer of rodlet bundles on aerial cell surfaces, conferring cellular hydrophobicity that supports fungal growth, development and dispersal; whereas Class II form highly ordered films at water-air interfaces through intermolecular interactions but contribute nothing to the rodlet structure. Hydph17 is a class I hydrophobin involved in mycelial growth. This Pleurotus ostreatus (strain PC15) (Oyster mushroom) protein is Class I hydrophobin 17.